A 178-amino-acid polypeptide reads, in one-letter code: Ribosomal RNA small subunit methyltransferase G (178 aa).

Residues Gly-54, Leu-59, 105 to 106 (LE), and Arg-120 contribute to the S-adenosyl-L-methionine site.

This sequence belongs to the methyltransferase superfamily. RNA methyltransferase RsmG family.

It is found in the cytoplasm. The enzyme catalyses guanosine(527) in 16S rRNA + S-adenosyl-L-methionine = N(7)-methylguanosine(527) in 16S rRNA + S-adenosyl-L-homocysteine. Its function is as follows. Specifically methylates the N7 position of guanine in position 527 of 16S rRNA. This is Ribosomal RNA small subunit methyltransferase G from Helicobacter pylori (strain ATCC 700392 / 26695) (Campylobacter pylori).